The chain runs to 62 residues: Photosystem II reaction center protein Z (62 aa).

2 helical membrane-spanning segments follow: residues 8–28 (ALIG…VAYA) and 41–61 (WVGS…NFFV).

The protein belongs to the PsbZ family. As to quaternary structure, PSII is composed of 1 copy each of membrane proteins PsbA, PsbB, PsbC, PsbD, PsbE, PsbF, PsbH, PsbI, PsbJ, PsbK, PsbL, PsbM, PsbT, PsbX, PsbY, PsbZ, Psb30/Ycf12, peripheral proteins PsbO, CyanoQ (PsbQ), PsbU, PsbV and a large number of cofactors. It forms dimeric complexes.

The protein resides in the cellular thylakoid membrane. In terms of biological role, may control the interaction of photosystem II (PSII) cores with the light-harvesting antenna, regulates electron flow through the 2 photosystem reaction centers. PSII is a light-driven water plastoquinone oxidoreductase, using light energy to abstract electrons from H(2)O, generating a proton gradient subsequently used for ATP formation. The protein is Photosystem II reaction center protein Z of Nostoc punctiforme (strain ATCC 29133 / PCC 73102).